The sequence spans 127 residues: Large ribosomal subunit protein bL17 (127 aa).

Belongs to the bacterial ribosomal protein bL17 family. Part of the 50S ribosomal subunit. Contacts protein L32.

The chain is Large ribosomal subunit protein bL17 from Xanthomonas euvesicatoria pv. vesicatoria (strain 85-10) (Xanthomonas campestris pv. vesicatoria).